A 484-amino-acid chain; its full sequence is BPI fold-containing family B member 1 (484 aa).

The N-terminal stretch at 1–21 (MAGPWTFTLLCGLLAATLIQA) is a signal peptide. Asparagine 48 carries N-linked (GlcNAc...) asparagine glycosylation. An intrachain disulfide couples cysteine 158 to cysteine 201. Residues asparagine 264 and asparagine 401 are each glycosylated (N-linked (GlcNAc...) asparagine).

Belongs to the BPI/LBP/Plunc superfamily. Plunc family. As to expression, detected in duodenum mucosal crypts of cholera patients, near Paneth cells (at protein level). Detected in trachea, nasal septal epithelium and lung.

The protein localises to the secreted. Functionally, may play a role in innate immunity in mouth, nose and lungs. Binds bacterial lipopolysaccharide (LPS) and modulates the cellular responses to LPS. The chain is BPI fold-containing family B member 1 (BPIFB1) from Homo sapiens (Human).